The following is a 395-amino-acid chain: uncharacterized protein (395 aa).

Transmembrane regions (helical) follow at residues 15–35 (ILAFSFFIAFLVVVSVLVTVF), 56–76 (WPWILLIVLGIVVTLAWNIII), 86–106 (FHAPWWEWVLFACVVQFFQIV), 131–151 (AVLLVTSTGAFWNLAQALITW), 175–195 (WFSFAGMIFDVVVAILFIFIA), 254–274 (LANILIAVVGYFSVFAVFAIV), 298–318 (IAITASNFIPVPSGEGATQFV), and 348–368 (VYIPAILFSLCFIGWVVQVVI).

Its subcellular location is the cell membrane. This is an uncharacterized protein from Mycoplasma pneumoniae (strain ATCC 29342 / M129 / Subtype 1) (Mycoplasmoides pneumoniae).